Reading from the N-terminus, the 420-residue chain is Phosphoglycerate kinase (420 aa).

(2R)-3-phosphoglycerate contacts are provided by valine 24, aspartate 25, phenylalanine 26, asparagine 27, arginine 40, serine 63, histidine 64, glycine 66, arginine 67, leucine 122, arginine 123, histidine 170, and arginine 171. Glycine 214 lines the ADP pocket. Glycine 214 is a binding site for CDP. The AMP site is built by alanine 215 and lysine 216. Residue alanine 215 coordinates ATP. Alanine 215 contributes to the Mg(2+) binding site. Aspartate 219 lines the CDP pocket. Aspartate 219 provides a ligand contact to Mg(2+). AMP is bound at residue lysine 220. Residue lysine 220 participates in ATP binding. Glycine 238 is a binding site for ADP. Glycine 238 lines the CDP pocket. AMP-binding residues include glycine 239 and glycine 313. Residues glycine 239 and glycine 313 each coordinate ATP. CDP contacts are provided by glycine 338 and phenylalanine 343. Phenylalanine 343 contributes to the ADP binding site. Glutamate 344 contacts AMP. ATP is bound by residues glutamate 344, aspartate 375, and threonine 376. Residue aspartate 375 participates in Mg(2+) binding.

It belongs to the phosphoglycerate kinase family. In terms of assembly, monomer. Requires Mg(2+) as cofactor.

The enzyme catalyses (2R)-3-phosphoglycerate + ATP = (2R)-3-phospho-glyceroyl phosphate + ADP. It functions in the pathway carbohydrate degradation; glycolysis; pyruvate from D-glyceraldehyde 3-phosphate: step 2/5. This chain is Phosphoglycerate kinase (PGK), found in Tetrahymena thermophila.